A 281-amino-acid polypeptide reads, in one-letter code: Arylamine N-acetyltransferase / N-hydroxyarylamine O-acetyltransferase (281 aa).

The active-site Acyl-thioester intermediate is Cys69. Active-site residues include His107 and Asp122.

This sequence belongs to the arylamine N-acetyltransferase family. In terms of assembly, monomer and homodimer.

The protein resides in the cytoplasm. The catalysed reaction is an arylamine + acetyl-CoA = an N-acetylarylamine + CoA. It catalyses the reaction an N-hydroxyarylamine + acetyl-CoA = an N-acetoxyarylamine + CoA. With respect to regulation, inhibited by N-ethylmaleimide and iodoacetamide. Catalyzes both the acetyl-CoA-dependent N-acetylation of aromatic amines and the O-acetylation of N-hydroxyarylamines. In vitro, catalyzes the O-acetylation of N-hydroxy-Glu-P-1, and the N-acetylation of isoniazid and 2-aminofluorene. The chain is Arylamine N-acetyltransferase / N-hydroxyarylamine O-acetyltransferase (nhoA) from Salmonella typhimurium (strain LT2 / SGSC1412 / ATCC 700720).